The following is a 303-amino-acid chain: Methionyl-tRNA formyltransferase (303 aa).

108 to 111 is a (6S)-5,6,7,8-tetrahydrofolate binding site; it reads SDLP.

This sequence belongs to the Fmt family.

The enzyme catalyses L-methionyl-tRNA(fMet) + (6R)-10-formyltetrahydrofolate = N-formyl-L-methionyl-tRNA(fMet) + (6S)-5,6,7,8-tetrahydrofolate + H(+). In terms of biological role, attaches a formyl group to the free amino group of methionyl-tRNA(fMet). The formyl group appears to play a dual role in the initiator identity of N-formylmethionyl-tRNA by promoting its recognition by IF2 and preventing the misappropriation of this tRNA by the elongation apparatus. The protein is Methionyl-tRNA formyltransferase of Rickettsia rickettsii (strain Iowa).